The primary structure comprises 561 residues: Dihydroxy-acid dehydratase 2 (561 aa).

Residue Cys-53 coordinates [2Fe-2S] cluster. Mg(2+) is bound at residue Asp-85. Cys-126 contributes to the [2Fe-2S] cluster binding site. Mg(2+) is bound by residues Asp-127 and Lys-128. Position 128 is an N6-carboxylysine (Lys-128). Cys-195 contacts [2Fe-2S] cluster. Glu-446 contacts Mg(2+). Ser-472 functions as the Proton acceptor in the catalytic mechanism.

The protein belongs to the IlvD/Edd family. Homodimer. [2Fe-2S] cluster serves as cofactor. Requires Mg(2+) as cofactor.

It carries out the reaction (2R)-2,3-dihydroxy-3-methylbutanoate = 3-methyl-2-oxobutanoate + H2O. The catalysed reaction is (2R,3R)-2,3-dihydroxy-3-methylpentanoate = (S)-3-methyl-2-oxopentanoate + H2O. It participates in amino-acid biosynthesis; L-isoleucine biosynthesis; L-isoleucine from 2-oxobutanoate: step 3/4. Its pathway is amino-acid biosynthesis; L-valine biosynthesis; L-valine from pyruvate: step 3/4. Functions in the biosynthesis of branched-chain amino acids. Catalyzes the dehydration of (2R,3R)-2,3-dihydroxy-3-methylpentanoate (2,3-dihydroxy-3-methylvalerate) into 2-oxo-3-methylpentanoate (2-oxo-3-methylvalerate) and of (2R)-2,3-dihydroxy-3-methylbutanoate (2,3-dihydroxyisovalerate) into 2-oxo-3-methylbutanoate (2-oxoisovalerate), the penultimate precursor to L-isoleucine and L-valine, respectively. This is Dihydroxy-acid dehydratase 2 from Acinetobacter baylyi (strain ATCC 33305 / BD413 / ADP1).